We begin with the raw amino-acid sequence, 257 residues long: Homeobox protein ceh-36 (257 aa).

A compositionally biased stretch (low complexity) spans 33–49 (SATTSSTTMAPMAPNSE). 2 disordered regions span residues 33-63 (SATT…TSFN) and 113-156 (DRNN…GTPE). A DNA-binding region (homeobox) is located at residues 55–117 (GRRERTSFNR…NRRAKDRNNK (63 aa)). Residues 123–137 (HPGSTSSRSSNGSPH) show a composition bias toward low complexity.

It belongs to the paired homeobox family. Interacts with sox-2. In terms of tissue distribution, expressed in ASE and AWC chemosensory neurons. Expressed left-right asymmetrically in the embryo, in the grandmother cell and the mother cell to the MI pharyngeal motorneuron but in neither analogous precursors of the e3D neuron.

It localises to the nucleus. Probable transcription factor, acting as a progenitor identity factor regulating the development of lineally-related embryonic cells including glial, excretory and neuronal cells. Mediates chemosensory function of ASE and AWC neurons. In ASE neurons, required to diversify the fate of the ASEL neurons from the ASER neurons. Acts cell-autonomously to establish a neuronal left right asymmetry, possibly promoting asymmetric expression of the helix-loop-helix proteins ngn-1 and hlh-2. In cooperation with the transcription factor sox-2, required for the differentiation of AWC olfactory neurons. May regulate the expression of sox-2 in AWC olfactory neurons. This is Homeobox protein ceh-36 from Caenorhabditis elegans.